The following is a 249-amino-acid chain: MRILIANDDGVTAPGIAALYDALADHADCVVIAPDQDKSGASSSLTLDRPLHPQRLDNGFISLNGTPTDCVHLGLNGLLEELPDMVVSGINLGANLGDDVLYSGTVAAAIEGRFLKGPAFAFSLVSRLTDNLPTAMHFARLLVSAHERLAVPPRTVLNVNIPNLPLDRVRGIQLTRLGHRARAAAPVKVVNPRGKEGYWIAAAGDAEDGGPGTDFHAVMQGYVSITPLQLDRTFHEAFGGLDEWLGGLT.

A divalent metal cation-binding residues include D8, D9, S39, and N91.

Belongs to the SurE nucleotidase family. A divalent metal cation serves as cofactor.

The protein resides in the cytoplasm. The catalysed reaction is a ribonucleoside 5'-phosphate + H2O = a ribonucleoside + phosphate. Its function is as follows. Nucleotidase that shows phosphatase activity on nucleoside 5'-monophosphates. This is 5'-nucleotidase SurE from Pseudomonas aeruginosa (strain UCBPP-PA14).